The chain runs to 425 residues: Serine--tRNA ligase (425 aa).

233-235 lines the L-serine pocket; that stretch reads TAE. An ATP-binding site is contributed by 264 to 266; that stretch reads RRE. Residue Glu-287 participates in L-serine binding. 351-354 contributes to the ATP binding site; that stretch reads EISS. Residue Ser-385 coordinates L-serine.

The protein belongs to the class-II aminoacyl-tRNA synthetase family. Type-1 seryl-tRNA synthetase subfamily. As to quaternary structure, homodimer. The tRNA molecule binds across the dimer.

It localises to the cytoplasm. It carries out the reaction tRNA(Ser) + L-serine + ATP = L-seryl-tRNA(Ser) + AMP + diphosphate + H(+). The enzyme catalyses tRNA(Sec) + L-serine + ATP = L-seryl-tRNA(Sec) + AMP + diphosphate + H(+). The protein operates within aminoacyl-tRNA biosynthesis; selenocysteinyl-tRNA(Sec) biosynthesis; L-seryl-tRNA(Sec) from L-serine and tRNA(Sec): step 1/1. Catalyzes the attachment of serine to tRNA(Ser). Is also able to aminoacylate tRNA(Sec) with serine, to form the misacylated tRNA L-seryl-tRNA(Sec), which will be further converted into selenocysteinyl-tRNA(Sec). The polypeptide is Serine--tRNA ligase (Prochlorococcus marinus (strain AS9601)).